The sequence spans 37 residues: Large ribosomal subunit protein bL36 (37 aa).

This sequence belongs to the bacterial ribosomal protein bL36 family.

This Koribacter versatilis (strain Ellin345) protein is Large ribosomal subunit protein bL36.